The primary structure comprises 172 residues: Peptide methionine sulfoxide reductase MsrA (172 aa).

C12 is a catalytic residue.

The protein belongs to the MsrA Met sulfoxide reductase family.

It catalyses the reaction L-methionyl-[protein] + [thioredoxin]-disulfide + H2O = L-methionyl-(S)-S-oxide-[protein] + [thioredoxin]-dithiol. It carries out the reaction [thioredoxin]-disulfide + L-methionine + H2O = L-methionine (S)-S-oxide + [thioredoxin]-dithiol. Has an important function as a repair enzyme for proteins that have been inactivated by oxidation. Catalyzes the reversible oxidation-reduction of methionine sulfoxide in proteins to methionine. The sequence is that of Peptide methionine sulfoxide reductase MsrA from Ligilactobacillus salivarius (strain UCC118) (Lactobacillus salivarius).